A 1362-amino-acid chain; its full sequence is Leptomycin B resistance protein pmd1 (1362 aa).

The disordered stretch occupies residues 1 to 45 (MSLHSKKSTSTVKDNEHSLDLSIKSIPSNEKNFSTEKSENEASES). Over 1 to 91 (MSLHSKKSTS…RILSYADKWD (91 aa)) the chain is Cytoplasmic. The segment covering 33 to 45 (FSTEKSENEASES) has biased composition (basic and acidic residues). 6 helical membrane-spanning segments follow: residues 92–115 (IMLQ…MSLV), 138–162 (TVDH…IYTV), 220–237 (LVFF…IAFI), 244–264 (LILS…VPFI), 320–346 (AIAM…WEGG), and 354–374 (LDVS…YSLA). Residues 95–385 (QLAGTITGIG…ISPKMQSFVS (291 aa)) enclose the ABC transmembrane type-1 1 domain. At 375–788 (NISPKMQSFV…LWFIHSFVRT (414 aa)) the chain is on the cytoplasmic side. The 246-residue stretch at 420-665 (IELKNIRFVY…NGAYARLVEA (246 aa)) folds into the ABC transporter 1 domain. Position 455–462 (455–462 (GASGSGKS)) interacts with ATP. The interval 748–768 (LPPADVGELNEEPKKSKKSKK) is disordered. Transmembrane regions (helical) follow at residues 789–809 (MIEI…GAAY), 835–859 (VNVF…SNFA), 916–935 (LGTF…LSLA), 940–957 (LGLV…AGYY), 1022–1040 (GLFF…ALTF), and 1054–1072 (IVQF…QQAG). Residues 795 to 1083 (LLIGILASMI…FFGYSADVTK (289 aa)) form the ABC transmembrane type-1 2 domain. At 1073–1362 (QFFGYSADVT…LVVEQGLNKA (290 aa)) the chain is on the cytoplasmic side. Residues 1119–1356 (IEFRQVEFSY…RGRYYELVVE (238 aa)) form the ABC transporter 2 domain. 1154 to 1161 (GSSGCGKS) lines the ATP pocket.

Belongs to the ABC transporter superfamily. ABCB family. Multidrug resistance exporter (TC 3.A.1.201) subfamily.

The protein resides in the membrane. May be a transmembrane transporter of the mating factor, namely P-factor or M-factor. Confers resistance to leptomycin B and to several other antifungal drugs. The polypeptide is Leptomycin B resistance protein pmd1 (pmd1) (Schizosaccharomyces pombe (strain 972 / ATCC 24843) (Fission yeast)).